The primary structure comprises 287 residues: MIKLYIISGMSGAGKSQALKIFEDFGFVCVDNIPIQIVADFIDICLKDSIRYKNVAISVDSRAGKSLTSFKDLLIVFKKKNIGYKIIFFNATDSVLLRRYSETRRRHPLGKSVSEGIKLERKIMDRIFTVADEIIDTSDLTIGELKKVISMLADICQSGKQYLNTSILSFGYKYGLPNDADIVYDVRFITNPNYVHGLKFKTGRDEAVRKYIERQKEFSVFFNIFSKLIETTLPGYIKESKSHLTIAIGCTGGQHRSVFTAEKLAGFLKSKKYKVKLNHRDILRHDN.

Position 9–16 (9–16 (GMSGAGKS)) interacts with ATP. GTP is bound at residue 60 to 63 (DSRA).

The protein belongs to the RapZ-like family.

In terms of biological role, displays ATPase and GTPase activities. This Endomicrobium trichonymphae protein is Nucleotide-binding protein TGRD_433.